The primary structure comprises 148 residues: Aspartate 1-decarboxylase (148 aa).

Ser-25 functions as the Schiff-base intermediate with substrate; via pyruvic acid in the catalytic mechanism. Ser-25 bears the Pyruvic acid (Ser) mark. Residue Thr-57 coordinates substrate. Residue Tyr-58 is the Proton donor of the active site. Residue 73–75 participates in substrate binding; sequence GAA.

It belongs to the PanD family. Heterooctamer of four alpha and four beta subunits. Requires pyruvate as cofactor. In terms of processing, is synthesized initially as an inactive proenzyme, which is activated by self-cleavage at a specific serine bond to produce a beta-subunit with a hydroxyl group at its C-terminus and an alpha-subunit with a pyruvoyl group at its N-terminus.

It localises to the cytoplasm. The enzyme catalyses L-aspartate + H(+) = beta-alanine + CO2. It functions in the pathway cofactor biosynthesis; (R)-pantothenate biosynthesis; beta-alanine from L-aspartate: step 1/1. In terms of biological role, catalyzes the pyruvoyl-dependent decarboxylation of aspartate to produce beta-alanine. This chain is Aspartate 1-decarboxylase, found in Rhodococcus opacus (strain B4).